The sequence spans 248 residues: NH(3)-dependent NAD(+) synthetase (248 aa).

30–37 contributes to the ATP binding site; sequence GLSGGIDS. Position 36 (Asp-36) interacts with Mg(2+). Arg-114 lines the deamido-NAD(+) pocket. An ATP-binding site is contributed by Thr-134. Glu-139 serves as a coordination point for Mg(2+). Deamido-NAD(+) is bound by residues Lys-147 and Asp-154. ATP is bound by residues Lys-163 and Thr-185. Residue 232 to 233 coordinates deamido-NAD(+); the sequence is HK.

This sequence belongs to the NAD synthetase family. Homodimer.

The catalysed reaction is deamido-NAD(+) + NH4(+) + ATP = AMP + diphosphate + NAD(+) + H(+). The protein operates within cofactor biosynthesis; NAD(+) biosynthesis; NAD(+) from deamido-NAD(+) (ammonia route): step 1/1. Its function is as follows. Catalyzes the ATP-dependent amidation of deamido-NAD to form NAD. Uses ammonia as a nitrogen source. This chain is NH(3)-dependent NAD(+) synthetase, found in Mycoplasma genitalium (strain ATCC 33530 / DSM 19775 / NCTC 10195 / G37) (Mycoplasmoides genitalium).